Consider the following 343-residue polypeptide: tRNA N6-adenosine threonylcarbamoyltransferase (343 aa).

The Fe cation site is built by H115 and H119. Substrate is bound by residues 137–141 (LVSGG), D170, G183, D187, and N276. D306 lines the Fe cation pocket.

It belongs to the KAE1 / TsaD family. Fe(2+) is required as a cofactor.

It localises to the cytoplasm. It catalyses the reaction L-threonylcarbamoyladenylate + adenosine(37) in tRNA = N(6)-L-threonylcarbamoyladenosine(37) in tRNA + AMP + H(+). Its function is as follows. Required for the formation of a threonylcarbamoyl group on adenosine at position 37 (t(6)A37) in tRNAs that read codons beginning with adenine. Is involved in the transfer of the threonylcarbamoyl moiety of threonylcarbamoyl-AMP (TC-AMP) to the N6 group of A37, together with TsaE and TsaB. TsaD likely plays a direct catalytic role in this reaction. The chain is tRNA N6-adenosine threonylcarbamoyltransferase from Limosilactobacillus reuteri (strain DSM 20016) (Lactobacillus reuteri).